Here is a 273-residue protein sequence, read N- to C-terminus: MDQLQSTIEEAFERRAEMTPRNVEAKLKESITQVLEMLDSGKLRVAEKTDGEWKTHQWIKKAVLLSFRIEDNSFIKGGFSNYFDKVPSKFADYSSRDFRNGGFRVVPPATVRKGAFIASNVVLMPSYVNIGAYVDEGTMVDTWATVGSCAQIGKNVHLSGGVGIGGVLEPVQANPTIIEDNCFIGARSEVVEGVIVGENSVISMGVYIGQSTRIYNRETGEISYGRIPPGSVVVSGSLPSADGKYSLYCAVIVKQVDAKTRAKTGINELLRGI.

Substrate is bound by residues Arg-104 and Asp-141.

Belongs to the transferase hexapeptide repeat family. In terms of assembly, homotrimer.

The protein resides in the cytoplasm. It carries out the reaction (S)-2,3,4,5-tetrahydrodipicolinate + succinyl-CoA + H2O = (S)-2-succinylamino-6-oxoheptanedioate + CoA. The protein operates within amino-acid biosynthesis; L-lysine biosynthesis via DAP pathway; LL-2,6-diaminopimelate from (S)-tetrahydrodipicolinate (succinylase route): step 1/3. In Nitrosospira multiformis (strain ATCC 25196 / NCIMB 11849 / C 71), this protein is 2,3,4,5-tetrahydropyridine-2,6-dicarboxylate N-succinyltransferase.